The sequence spans 97 residues: uncharacterized protein (97 aa).

Residues 1–21 form the signal peptide; that stretch reads MNKKFSISLLSTILAFLLVLG. The N-palmitoyl cysteine moiety is linked to residue Cys-22. Cys-22 is lipidated: S-diacylglycerol cysteine.

To B.burgdorferi BBD15.

It is found in the cell membrane. This is an uncharacterized protein from Borreliella burgdorferi (strain ATCC 35210 / DSM 4680 / CIP 102532 / B31) (Borrelia burgdorferi).